Here is a 71-residue protein sequence, read N- to C-terminus: UPF0435 protein BPUM_0734 (71 aa).

Belongs to the UPF0435 family.

This is UPF0435 protein BPUM_0734 from Bacillus pumilus (strain SAFR-032).